We begin with the raw amino-acid sequence, 474 residues long: tRNA-2-methylthio-N(6)-dimethylallyladenosine synthase (474 aa).

The 118-residue stretch at 3 to 120 folds into the MTTase N-terminal domain; sequence KKLLIKTWGC…LPEMIKQSQT (118 aa). Residues Cys12, Cys49, Cys83, Cys157, Cys161, and Cys164 each contribute to the [4Fe-4S] cluster site. The 233-residue stretch at 143-375 folds into the Radical SAM core domain; it reads RAEGATAFVS…QQTINAQAMR (233 aa). One can recognise a TRAM domain in the interval 378–441; the sequence is RLMLATEQRV…ANSLRGELVR (64 aa).

It belongs to the methylthiotransferase family. MiaB subfamily. In terms of assembly, monomer. [4Fe-4S] cluster is required as a cofactor.

It is found in the cytoplasm. It catalyses the reaction N(6)-dimethylallyladenosine(37) in tRNA + (sulfur carrier)-SH + AH2 + 2 S-adenosyl-L-methionine = 2-methylsulfanyl-N(6)-dimethylallyladenosine(37) in tRNA + (sulfur carrier)-H + 5'-deoxyadenosine + L-methionine + A + S-adenosyl-L-homocysteine + 2 H(+). Functionally, catalyzes the methylthiolation of N6-(dimethylallyl)adenosine (i(6)A), leading to the formation of 2-methylthio-N6-(dimethylallyl)adenosine (ms(2)i(6)A) at position 37 in tRNAs that read codons beginning with uridine. This chain is tRNA-2-methylthio-N(6)-dimethylallyladenosine synthase, found in Vibrio parahaemolyticus serotype O3:K6 (strain RIMD 2210633).